The chain runs to 212 residues: Ras-related protein Rab-15 (212 aa).

Residues serine 17, glycine 18, valine 19, glycine 20, lysine 21, threonine 22, cysteine 23, serine 35, serine 39, and threonine 40 each contribute to the GTP site. Residue threonine 22 coordinates Mg(2+). 2 short sequence motifs (switch) span residues 31 to 45 and 63 to 80; these read NEFHSSHISTIGVDF and DTAGQERYQTITKQYYRR. Mg(2+) is bound by residues threonine 40 and aspartate 63. GTP is bound by residues glycine 66, asparagine 121, lysine 122, aspartate 124, serine 151, and alanine 152. The interval 192–212 is disordered; sequence ELEEDEGKPEGPANSSKTCWC. S-geranylgeranyl cysteine attachment occurs at residues cysteine 210 and cysteine 212. Cysteine 212 is modified (cysteine methyl ester).

Belongs to the small GTPase superfamily. Rab family. As to quaternary structure, the GTP bound form of RAB15 interacts with REP15. Interacts (GTP-bound form) with MICAL1, MICAL3, MICALCL, EHBP1 and EHBP1L1. The cofactor is Mg(2+).

The protein localises to the cell membrane. It catalyses the reaction GTP + H2O = GDP + phosphate + H(+). Its activity is regulated as follows. Regulated by guanine nucleotide exchange factors (GEFs) which promote the exchange of bound GDP for free GTP. Regulated by GTPase activating proteins (GAPs) which increase the GTP hydrolysis activity. Inhibited by GDP dissociation inhibitors (GDIs). Functionally, the small GTPases Rab are key regulators of intracellular membrane trafficking, from the formation of transport vesicles to their fusion with membranes. Rabs cycle between an inactive GDP-bound form and an active GTP-bound form that is able to recruit to membranes different sets of downstream effectors directly responsible for vesicle formation, movement, tethering and fusion. RAB15 may act in concert with RAB3A in regulating aspects of synaptic vesicle membrane flow within the nerve terminal. The sequence is that of Ras-related protein Rab-15 (RAB15) from Bos taurus (Bovine).